A 128-amino-acid polypeptide reads, in one-letter code: Sulfurtransferase TusD (128 aa).

C78 (cysteine persulfide intermediate) is an active-site residue.

This sequence belongs to the DsrE/TusD family. In terms of assembly, heterohexamer, formed by a dimer of trimers. The hexameric TusBCD complex contains 2 copies each of TusB, TusC and TusD. The TusBCD complex interacts with TusE.

It is found in the cytoplasm. Its function is as follows. Part of a sulfur-relay system required for 2-thiolation of 5-methylaminomethyl-2-thiouridine (mnm(5)s(2)U) at tRNA wobble positions. Accepts sulfur from TusA and transfers it in turn to TusE. The polypeptide is Sulfurtransferase TusD (Escherichia coli O17:K52:H18 (strain UMN026 / ExPEC)).